We begin with the raw amino-acid sequence, 136 residues long: SPbeta prophage-derived uncharacterized protein YonI (136 aa).

This Bacillus subtilis (strain 168) protein is SPbeta prophage-derived uncharacterized protein YonI (yonI).